A 1373-amino-acid polypeptide reads, in one-letter code: MAERANLVFHNKSIDGTAMKRLISRLIDHFGMAYTAHILDQVKTLGFQQATATSISLGIDDLLTIPSKGWLVQDAEQQSLILEKHHHYGNVHAVEKLRQSIEIWYSTSEYLRQEMNPNFRMTDPYNPVHIMSFSGARGNVSQVHQLVGMRGLMSDPQGQMIDLPIQSNLREGLSLTEYIISCYGARKGVVDTAVRTSDAGYLTRRLVEVVQHIVVRRTDCGTIRGISVSPRNGRMPERIFTQILIGRVLADDIYLGSRCIATRNQDIGVGLVNRFITFRTQPIAIRTPFTCRSTSWICRLCYGRSPTHGDLVELGEAVGIIAGQSIGEPGTQLTLRTFHTGGVFTGGTAEHVRAPYNGKIKFNEGLVHPTRTRHGHPAFLCYIDLYVTIESEDSLHNVNIPPKSFLLVQNDQYVESEQVIAEIRAGASTLNFKEKVRKHIYSDSEGEMHWSTDVYHAPEFTYGNVHLLPKASRLWILSGRPYRSSVVSFSLHKDQDQTTGNSLSFEQKIYNLSMTNDQVQNKFLDPYIKKSSKKEDRSPNYSELNGMSHCNHIYPAKNSDLLAKRRKNRLIIPFQFQLSQEREKELMSLSNGISIEIPINGIFRRNSIFAYFNDPRYRTKSSGITKYETIETHSSVKKEDLIEYRGVKEFRPKYQMKVDRFFFISQEVHILPGSSSIMVRNNSIIGVDTQITLNTRSRVGGVVRVERKKKKIELKIFSGDIYFPGETDKISRHSGILIPPGKTNYKESKNIKNWLYVQRITPTKKKYFVLVRPVVTYEITDGINLATLLPQDLLQERGNVQLRVFNYILYGNGKVTRGIYDTSIQLVRTCLVLNWNQDKKDSSIEEARASFVEVRTNGIIRYFLKIGLMNRALSYIGKRNNPPLFSDDGLEYTNMNPFFSIYSKPKLQQAFNPNQGTVRMLVGKNKECQSFIILSSSNCFRMGPFTLNGVKYPKESIKKDRLILIKNSFGPLGTVLNFVNFFFFYHLITHNQILVNNYLQLDNLKQTCQVLKYQYYLMDENGIIYNPDFCSNIILNPFNLHWDFLHYNFCDETSTKMRLGQFICENICIKKNGLHLKPGQIIIVQFDSVVIRSAKPCLATPGATVHGHYGEIIYEGDTLVTFIYEKSRSGDITQGLPKVEQVLEVRSVESISMNLEKRINGWNERIKKILGIPWGFLVGAELTIAQSRISLVNKIQKVYRSQGVQIHDRHIEIIVRQITSKVLVSEDGMSNIFLPGELIGLFRAERTGRALEEAICYRTILLGITRASLNTQSFISEASFQETARVLAKAALRGRIDWLKGLKENVVLGGMIPVGTGFKGFVHRSNQHKSISIPLKIKNKNRLEGEMRDILFYHRELLDSCFLKNLGDRSKQQ.

4 residues coordinate Zn(2+): Cys-220, Cys-291, Cys-298, and Cys-301.

It belongs to the RNA polymerase beta' chain family. RpoC2 subfamily. In plastids the minimal PEP RNA polymerase catalytic core is composed of four subunits: alpha, beta, beta', and beta''. When a (nuclear-encoded) sigma factor is associated with the core the holoenzyme is formed, which can initiate transcription. Zn(2+) is required as a cofactor.

The protein localises to the plastid. The protein resides in the chloroplast. The catalysed reaction is RNA(n) + a ribonucleoside 5'-triphosphate = RNA(n+1) + diphosphate. In terms of biological role, DNA-dependent RNA polymerase catalyzes the transcription of DNA into RNA using the four ribonucleoside triphosphates as substrates. This Silene latifolia (White campion) protein is DNA-directed RNA polymerase subunit beta''.